The sequence spans 273 residues: Imidazole glycerol phosphate synthase subunit HisF (273 aa).

Catalysis depends on residues Asp11 and Asp134.

The protein belongs to the HisA/HisF family. In terms of assembly, heterodimer of HisH and HisF.

It localises to the cytoplasm. It carries out the reaction 5-[(5-phospho-1-deoxy-D-ribulos-1-ylimino)methylamino]-1-(5-phospho-beta-D-ribosyl)imidazole-4-carboxamide + L-glutamine = D-erythro-1-(imidazol-4-yl)glycerol 3-phosphate + 5-amino-1-(5-phospho-beta-D-ribosyl)imidazole-4-carboxamide + L-glutamate + H(+). Its pathway is amino-acid biosynthesis; L-histidine biosynthesis; L-histidine from 5-phospho-alpha-D-ribose 1-diphosphate: step 5/9. IGPS catalyzes the conversion of PRFAR and glutamine to IGP, AICAR and glutamate. The HisF subunit catalyzes the cyclization activity that produces IGP and AICAR from PRFAR using the ammonia provided by the HisH subunit. This Methanocella arvoryzae (strain DSM 22066 / NBRC 105507 / MRE50) protein is Imidazole glycerol phosphate synthase subunit HisF.